A 218-amino-acid chain; its full sequence is Octanoyltransferase (218 aa).

The BPL/LPL catalytic domain maps to 31–207 (AQTPDELWLL…QLAAQLGYAE (177 aa)). Substrate is bound by residues 70 to 77 (RGGQVTYH), 137 to 139 (SLG), and 150 to 152 (GLA). Cys-168 acts as the Acyl-thioester intermediate in catalysis.

Belongs to the LipB family.

The protein resides in the cytoplasm. It catalyses the reaction octanoyl-[ACP] + L-lysyl-[protein] = N(6)-octanoyl-L-lysyl-[protein] + holo-[ACP] + H(+). It participates in protein modification; protein lipoylation via endogenous pathway; protein N(6)-(lipoyl)lysine from octanoyl-[acyl-carrier-protein]: step 1/2. Its function is as follows. Catalyzes the transfer of endogenously produced octanoic acid from octanoyl-acyl-carrier-protein onto the lipoyl domains of lipoate-dependent enzymes. Lipoyl-ACP can also act as a substrate although octanoyl-ACP is likely to be the physiological substrate. The sequence is that of Octanoyltransferase from Azotobacter vinelandii (strain DJ / ATCC BAA-1303).